The chain runs to 45 residues: Large ribosomal subunit protein bL34 (45 aa).

It belongs to the bacterial ribosomal protein bL34 family.

The polypeptide is Large ribosomal subunit protein bL34 (Paenarthrobacter aurescens (strain TC1)).